An 85-amino-acid chain; its full sequence is Acyl carrier protein ScoB (85 aa).

A Carrier domain is found at 1–77; that stretch reads MPAPLTLDGF…QWWQLLSARQ (77 aa). Position 38 is an O-(pantetheine 4'-phosphoryl)serine (Ser38).

It belongs to the acyl carrier protein (ACP) family. Pantetheine 4'-phosphate serves as cofactor.

It participates in lipid metabolism; fatty acid metabolism. Acyl-carrier protein (ACP) involved in the biosynthesis of a unique class of isonitrile lipopeptides (INLPs). Is the dedicated ACP for the loading of activated acyl groups catalyzed by ScoC. The chain is Acyl carrier protein ScoB from Streptomyces coeruleorubidus.